A 65-amino-acid chain; its full sequence is Large ribosomal subunit protein uL30 (65 aa).

This sequence belongs to the universal ribosomal protein uL30 family. Part of the 50S ribosomal subunit.

This chain is Large ribosomal subunit protein uL30, found in Rickettsia bellii (strain OSU 85-389).